Reading from the N-terminus, the 513-residue chain is 2,3-bisphosphoglycerate-independent phosphoglycerate mutase (513 aa).

Residues Asp-13 and Ser-63 each coordinate Mn(2+). Catalysis depends on Ser-63, which acts as the Phosphoserine intermediate. Substrate-binding positions include His-124, Arg-154–Asp-155, Arg-186, Arg-192, Arg-262–Arg-265, and Lys-335. The Mn(2+) site is built by Asp-402, His-406, Asp-443, His-444, and His-462.

Belongs to the BPG-independent phosphoglycerate mutase family. As to quaternary structure, monomer. Requires Mn(2+) as cofactor.

It carries out the reaction (2R)-2-phosphoglycerate = (2R)-3-phosphoglycerate. It functions in the pathway carbohydrate degradation; glycolysis; pyruvate from D-glyceraldehyde 3-phosphate: step 3/5. Functionally, catalyzes the interconversion of 2-phosphoglycerate and 3-phosphoglycerate. The sequence is that of 2,3-bisphosphoglycerate-independent phosphoglycerate mutase from Photobacterium profundum (strain SS9).